A 374-amino-acid polypeptide reads, in one-letter code: N-acetyldiaminopimelate deacetylase (374 aa).

The active site involves Asp-68. The Proton acceptor role is filled by Glu-127.

The protein belongs to the peptidase M20A family. N-acetyldiaminopimelate deacetylase subfamily.

It catalyses the reaction N-acetyl-(2S,6S)-2,6-diaminopimelate + H2O = (2S,6S)-2,6-diaminopimelate + acetate. The protein operates within amino-acid biosynthesis; L-lysine biosynthesis via DAP pathway; LL-2,6-diaminopimelate from (S)-tetrahydrodipicolinate (acetylase route): step 3/3. Catalyzes the conversion of N-acetyl-diaminopimelate to diaminopimelate and acetate. The sequence is that of N-acetyldiaminopimelate deacetylase from Shouchella clausii (strain KSM-K16) (Alkalihalobacillus clausii).